The sequence spans 386 residues: Putative membrane-bound transacylase BcsY (386 aa).

10 helical membrane-spanning segments follow: residues 37–57 (LAIA…FIGV), 91–111 (LLPA…WWVL), 118–138 (IALN…SGHV), 156–176 (LSLE…LPLT), 181–201 (LVLS…WHTG), 237–257 (AVYA…PLSY), 258–278 (ACPS…IMLP), 290–310 (LSPL…GIVV), 322–342 (AMMA…YVLV), and 362–382 (AALL…ISHV).

The protein belongs to the acyltransferase 3 family.

Its subcellular location is the cell inner membrane. It participates in glycan metabolism; bacterial cellulose biosynthesis. May acylate a glucose moiety into cellulose fibrils, in cooperation with BcsABII and BcsCII. This is Putative membrane-bound transacylase BcsY (bcsY) from Komagataeibacter xylinus (Gluconacetobacter xylinus).